Reading from the N-terminus, the 675-residue chain is Putative exonuclease GOR (675 aa).

The segment covering 66–79 (VAKEAAPEASRHLG) has biased composition (basic and acidic residues). Disordered stretches follow at residues 66–90 (VAKE…APEG) and 225–263 (AKRT…TATT). Positions 358–483 (MPGLSRAALY…VRDGRKESLD (126 aa)) are GOR1-125 epitope.

The protein belongs to the REXO1/REXO3 family.

The protein localises to the cytoplasm. It is found in the nucleus. This Homo sapiens (Human) protein is Putative exonuclease GOR (REXO1L1P).